The following is a 271-amino-acid chain: Putative phosphoenolpyruvate synthase regulatory protein (271 aa).

152-159 (GVSRCGKT) lines the ADP pocket.

The protein belongs to the pyruvate, phosphate/water dikinase regulatory protein family. PSRP subfamily.

It carries out the reaction [pyruvate, water dikinase] + ADP = [pyruvate, water dikinase]-phosphate + AMP + H(+). It catalyses the reaction [pyruvate, water dikinase]-phosphate + phosphate + H(+) = [pyruvate, water dikinase] + diphosphate. Its function is as follows. Bifunctional serine/threonine kinase and phosphorylase involved in the regulation of the phosphoenolpyruvate synthase (PEPS) by catalyzing its phosphorylation/dephosphorylation. In Legionella pneumophila (strain Corby), this protein is Putative phosphoenolpyruvate synthase regulatory protein.